A 347-amino-acid polypeptide reads, in one-letter code: NAD-dependent alcohol dehydrogenase (347 aa).

Lysine 11 carries the post-translational modification N6-methyllysine; partial. 7 residues coordinate Zn(2+): cysteine 38, histidine 68, glutamate 98, cysteine 101, cysteine 104, cysteine 112, and cysteine 154. N6-methyllysine; partial is present on lysine 213.

This sequence belongs to the zinc-containing alcohol dehydrogenase family. Homodimer and homotetramer. The cofactor is Zn(2+).

The catalysed reaction is a primary alcohol + NAD(+) = an aldehyde + NADH + H(+). It catalyses the reaction a secondary alcohol + NAD(+) = a ketone + NADH + H(+). This Saccharolobus solfataricus (strain ATCC 35092 / DSM 1617 / JCM 11322 / P2) (Sulfolobus solfataricus) protein is NAD-dependent alcohol dehydrogenase (adh).